We begin with the raw amino-acid sequence, 493 residues long: MSIYQSIQDFISLALQNGTIEPLDELYHRNQLLHFLGLNDWAEVDKEVHETNSLILMDQLLAIANENNVIAKGQDEFYEAALMNFMTPRPSKINHDFWEKYQASPDAATQYFYELAQQVNQVKTRDIARNIAFSHLTKYGKLEITINLSKPEKDPKAIAAAKLVKASSYPACQLCLENEGFYGLGNKPARSNHRIIQVSINGEDWGFQYSPYAYFNEHSILLNAKHQPMEINKRAFDNLLGFLDKFPNYMIGSNADLPIVGGSILTHDHYQAGRHDFPMAKAELRETIELAHFPEVSCGIVNWPMSVLRLASENQVELSKAADDFLKKWQVYSDESLQIKAKSTDGTPHHTITPIARIRDGKYELDLVLRDNNTNEKYPDGIFHPHPALHHIKKENIGLIEVMGLAILPARLETELLEVERYLLNQDNQMNEIHKAWAEQLKNEEHFTRETVHATVQGAVGEVFEEVLKDAGVFKDTQEGHEGFRKFIDFVNQ.

It belongs to the galactose-1-phosphate uridylyltransferase type 2 family.

It is found in the cytoplasm. The catalysed reaction is alpha-D-galactose 1-phosphate + UDP-alpha-D-glucose = alpha-D-glucose 1-phosphate + UDP-alpha-D-galactose. The protein operates within carbohydrate metabolism; galactose metabolism. The chain is Galactose-1-phosphate uridylyltransferase from Lactococcus lactis subsp. cremoris (strain SK11).